The primary structure comprises 370 residues: Erythronate-4-phosphate dehydrogenase (370 aa).

Substrate is bound by residues Ser-45 and Thr-66. Asp-142 and Thr-169 together coordinate NAD(+). The active site involves Arg-202. An NAD(+)-binding site is contributed by Asp-228. Glu-233 is an active-site residue. The active-site Proton donor is the His-250. An NAD(+)-binding site is contributed by Gly-253. Tyr-254 is a substrate binding site.

The protein belongs to the D-isomer specific 2-hydroxyacid dehydrogenase family. PdxB subfamily. In terms of assembly, homodimer.

The protein localises to the cytoplasm. It carries out the reaction 4-phospho-D-erythronate + NAD(+) = (R)-3-hydroxy-2-oxo-4-phosphooxybutanoate + NADH + H(+). It participates in cofactor biosynthesis; pyridoxine 5'-phosphate biosynthesis; pyridoxine 5'-phosphate from D-erythrose 4-phosphate: step 2/5. Its function is as follows. Catalyzes the oxidation of erythronate-4-phosphate to 3-hydroxy-2-oxo-4-phosphonooxybutanoate. In Teredinibacter turnerae (strain ATCC 39867 / T7901), this protein is Erythronate-4-phosphate dehydrogenase.